The sequence spans 125 residues: Small ribosomal subunit protein eS6 (125 aa).

The protein belongs to the eukaryotic ribosomal protein eS6 family.

The sequence is that of Small ribosomal subunit protein eS6 from Pyrococcus horikoshii (strain ATCC 700860 / DSM 12428 / JCM 9974 / NBRC 100139 / OT-3).